The chain runs to 101 residues: UPF0473 protein MGAS10750_Spy1887 (101 aa).

It belongs to the UPF0473 family.

This Streptococcus pyogenes serotype M4 (strain MGAS10750) protein is UPF0473 protein MGAS10750_Spy1887.